A 70-amino-acid polypeptide reads, in one-letter code: Alpha-elapitoxin-Ast2a (70 aa).

5 cysteine pairs are disulfide-bonded: C3-C20, C13-C41, C26-C30, C45-C56, and C57-C62. S70 is modified (serine amide).

Belongs to the three-finger toxin family. Long-chain subfamily. Type II alpha-neurotoxin sub-subfamily. As to expression, expressed by the venom gland.

The protein resides in the secreted. In terms of biological role, binds with high affinity to muscular (alpha-1/CHRNA1) and neuronal (alpha-7/CHRNA7) nicotinic acetylcholine receptor (nAChR) and inhibits acetylcholine from binding to the receptor, thereby impairing neuromuscular and neuronal transmission. The protein is Alpha-elapitoxin-Ast2a of Hydrophis stokesii (Stokes's sea snake).